The following is a 237-amino-acid chain: CD209 antigen-like protein D (237 aa).

Residues methionine 1 to leucine 54 are Cytoplasmic-facing. Residues valine 55–valine 75 form a helical; Signal-anchor for type II membrane protein membrane-spanning segment. Residues serine 76–lysine 237 are Extracellular-facing. A disulfide bridge links cysteine 106 with cysteine 117. Residues phenylalanine 112–lysine 227 enclose the C-type lectin domain. Asparagine 114 and asparagine 129 each carry an N-linked (GlcNAc...) asparagine glycan. Intrachain disulfides connect cysteine 134–cysteine 226 and cysteine 205–cysteine 218. The Ca(2+) site is built by glutamate 196, asparagine 198, glutamate 203, asparagine 214, and aspartate 215.

The protein localises to the membrane. Probable pathogen-recognition receptor. May mediate the endocytosis of pathogens which are subsequently degraded in lysosomal compartments. May recognize in a calcium-dependent manner high mannose N-linked oligosaccharides in a variety of pathogen antigens. The protein is CD209 antigen-like protein D (Cd209d) of Mus musculus (Mouse).